The primary structure comprises 238 residues: Uridylate kinase (238 aa).

12–15 (KLSG) contacts ATP. Gly-54 provides a ligand contact to UMP. Gly-55 and Arg-59 together coordinate ATP. UMP is bound by residues Asp-74 and 135–142 (TGNPYFST). Residues Tyr-168 and Asp-171 each coordinate ATP.

The protein belongs to the UMP kinase family. In terms of assembly, homohexamer.

The protein localises to the cytoplasm. It carries out the reaction UMP + ATP = UDP + ADP. It functions in the pathway pyrimidine metabolism; CTP biosynthesis via de novo pathway; UDP from UMP (UMPK route): step 1/1. Its activity is regulated as follows. Inhibited by UTP. In terms of biological role, catalyzes the reversible phosphorylation of UMP to UDP. The polypeptide is Uridylate kinase (Syntrophomonas wolfei subsp. wolfei (strain DSM 2245B / Goettingen)).